The chain runs to 468 residues: Two-component response regulator-like APRR9 (468 aa).

Positions 38–156 constitute a Response regulatory domain; it reads RVLLVESDYS…ELKNLWQHVW (119 aa). Composition is skewed to polar residues over residues 168–177 and 194–203; these read HAQSLPASQH and DQGSGAQAIN. Disordered stretches follow at residues 168–203, 302–416, and 442–468; these read HAQS…QAIN, VVAL…SRSQ, and RKKL…STKS. The span at 315 to 327 shows a compositional bias: basic and acidic residues; that stretch reads TPTESHEKLRKVT. Residues 328 to 364 are compositionally biased toward polar residues; it reads SDQGSATTSSNQENIGSSSVSFRNQVLQSTVTNQKQD. Basic and acidic residues-rich tracts occupy residues 371-382 and 400-409; these read SNREKAASKEVE and EKPKEEESAK. The 43-residue stretch at 417–459 folds into the CCT domain; it reads REAALMKFRLKRKDRCFDKKVRYQSRKKLAEQRPRVKGQFVRT. Residues 458–468 show a composition bias toward polar residues; sequence RTVNSDASTKS.

It belongs to the ARR-like family. Phosphorylated. Phosphorylation varies throughout the diurnal cycle.

The protein resides in the nucleus. Functionally, transcriptional repressor of CCA1 and LHY, and positive regulator of LWD1 and LWD2 expression. Controls photoperiodic flowering response and temperature compensation. Involved in the positive and negative feedback loops of the circadian clock. Expression of several members of the ARR-like family is controlled by circadian rhythm. Regulated at the transcriptional level by a corepressor complex consisting of ELF4, ELF3, and LUX. APRR9, APRR7, and APRR5 coordinately act on the upstream region of the target genes to repress their expression from noon until midnight. The particular coordinated sequential expression of APRR9, APRR7, APRR5, APRR3 and APPR1 result to circadian waves that may be at the basis of the endogenous circadian clock. The chain is Two-component response regulator-like APRR9 (APRR9) from Arabidopsis thaliana (Mouse-ear cress).